The sequence spans 332 residues: Protein EXORDIUM-like 6 (332 aa).

A signal peptide spans 1–27 (MAMASASSSSSSISVIIFLLLAPLCLS). N-linked (GlcNAc...) asparagine glycans are attached at residues asparagine 36, asparagine 102, and asparagine 143.

This sequence belongs to the EXORDIUM family.

Its subcellular location is the secreted. It localises to the extracellular space. The protein localises to the apoplast. In terms of biological role, may play a role in a brassinosteroid-dependent regulation of growth and development. This chain is Protein EXORDIUM-like 6 (EXL6), found in Arabidopsis thaliana (Mouse-ear cress).